A 156-amino-acid chain; its full sequence is Transcription elongation factor GreA (156 aa).

The stretch at 1–84 (MAKYTISKHR…IEDVMRSTDE (84 aa)) forms a coiled coil.

It belongs to the GreA/GreB family.

Functionally, necessary for efficient RNA polymerase transcription elongation past template-encoded arresting sites. The arresting sites in DNA have the property of trapping a certain fraction of elongating RNA polymerases that pass through, resulting in locked ternary complexes. Cleavage of the nascent transcript by cleavage factors such as GreA or GreB allows the resumption of elongation from the new 3'terminus. GreA releases sequences of 2 to 3 nucleotides. This is Transcription elongation factor GreA from Ureaplasma urealyticum serovar 10 (strain ATCC 33699 / Western).